The chain runs to 572 residues: MFKQTFKVNIIPTQPFEGQKPGTSGLRKKVTEVMKTNYLGNFVQSIFNALPEDKLKGSTIVVGGDGRYYNNDAIQLIFQIAAANGVGKILVGRYGLLSTPAISAIVRARSALGAIILTASHNPGGPNGDFGIKYNMSNGGPAPESITNAIYKHTTSITQIKTTRNVSVDNLGLLKTYEWNDGEFVIEVIDSADDYVSLLKTIFDFDGIRKFVKNHPNFTFNFDAMSGVTGAYGKRIFTDELGIPESCLINCNPSQDFNGGHPDPNLTYAPLLVKKMNNGEFDMGCASDGDGDRNMILGKRFFLNPSDSVAVIASNYKAIPYFNKGGLKGLARSMPTSAALERVATDLKVPFFEVPTGWKFFGNLMDAGTLSICGEESFGTGSDHIREKDGIWAIICWLQILTHHNQSTNDKNFVSIEEIVKQHWAKYGRNYYSRYDYEEIDTAPAEAMMKHVSQQIESKQLIGKKFTGISDSLEYEIASCDDFEYKDPIDSSVSSHQGLRIIFTDGSRIIYRLSGTGSTGATVRVYFDKYETQPTQLNNDVQTHLKSLIHIALVEISKLNHYTGRNEPNVIT.

Residues T23, R27, 120–121, and K133 each bind substrate; that span reads SH. S120 functions as the Phosphoserine intermediate in the catalytic mechanism. S120 contributes to the Mg(2+) binding site. Mg(2+) contacts are provided by D288, D290, and D292. Substrate is bound by residues 292-293, T356, 375-377, K388, and R524; these read DR and EES.

It belongs to the phosphohexose mutase family. Requires Mg(2+) as cofactor.

Its subcellular location is the cytoplasm. The catalysed reaction is alpha-D-glucose 1-phosphate = alpha-D-glucose 6-phosphate. Functionally, this enzyme participates in both the breakdown and synthesis of glucose. The polypeptide is Phosphoglucomutase-1 (pgmA) (Dictyostelium discoideum (Social amoeba)).